The primary structure comprises 908 residues: Translation initiation factor IF-2 (908 aa).

The interval 52–318 is disordered; that stretch reads QSHGQEEKRR…RSSQSSQHKF (267 aa). The segment covering 65 to 84 has biased composition (polar residues); sequence KSKTTSTARVTGSSGKSKSV. Composition is skewed to basic and acidic residues over residues 94–108, 120–138, 176–185, 193–238, 270–280, and 294–303; these read FEKP…ELAA, AAKD…EERQ, IEVKPKDQPK, PKVE…EQMR, SFEKERREIKR, and KNQDEREIKN. Positions 409 to 578 constitute a tr-type G domain; it reads TRPPVVTIMG…SLQAELMELE (170 aa). The tract at residues 418-425 is G1; it reads GHVDHGKT. 418 to 425 contacts GTP; the sequence is GHVDHGKT. The segment at 443 to 447 is G2; that stretch reads GITQH. A G3 region spans residues 464–467; it reads DTPG. Residues 464-468 and 518-521 contribute to the GTP site; these read DTPGH and NKMD. A G4 region spans residues 518–521; the sequence is NKMD. A G5 region spans residues 554–556; sequence SAK.

The protein belongs to the TRAFAC class translation factor GTPase superfamily. Classic translation factor GTPase family. IF-2 subfamily.

The protein resides in the cytoplasm. Functionally, one of the essential components for the initiation of protein synthesis. Protects formylmethionyl-tRNA from spontaneous hydrolysis and promotes its binding to the 30S ribosomal subunits. Also involved in the hydrolysis of GTP during the formation of the 70S ribosomal complex. This Psychrobacter cryohalolentis (strain ATCC BAA-1226 / DSM 17306 / VKM B-2378 / K5) protein is Translation initiation factor IF-2.